The primary structure comprises 114 residues: uncharacterized protein (114 aa).

It to E.coli YggL.

This is an uncharacterized protein from Haemophilus influenzae (strain ATCC 51907 / DSM 11121 / KW20 / Rd).